The sequence spans 74 residues: uncharacterized protein (74 aa).

This is an uncharacterized protein from Homo sapiens (Human).